Reading from the N-terminus, the 238-residue chain is Putative type I specificity subunit S.MpnORF201P (238 aa).

This sequence belongs to the type-I restriction system S methylase family. In terms of assembly, the methyltransferase is composed of M and S polypeptides.

The specificity (S) subunit of a type I methyltransferase (MTase); this subunit dictates DNA sequence specificity. The single R subunit has multiple frameshifts and is probably not expressed. This chain is Putative type I specificity subunit S.MpnORF201P, found in Mycoplasma pneumoniae (strain ATCC 29342 / M129 / Subtype 1) (Mycoplasmoides pneumoniae).